Here is a 253-residue protein sequence, read N- to C-terminus: 5-oxoprolinase subunit A (253 aa).

It belongs to the LamB/PxpA family. In terms of assembly, forms a complex composed of PxpA, PxpB and PxpC.

The catalysed reaction is 5-oxo-L-proline + ATP + 2 H2O = L-glutamate + ADP + phosphate + H(+). In terms of biological role, catalyzes the cleavage of 5-oxoproline to form L-glutamate coupled to the hydrolysis of ATP to ADP and inorganic phosphate. The chain is 5-oxoprolinase subunit A from Bacillus thuringiensis subsp. konkukian (strain 97-27).